The following is a 160-amino-acid chain: UPF0262 protein ELI_10965 (160 aa).

It belongs to the UPF0262 family.

This Erythrobacter litoralis (strain HTCC2594) protein is UPF0262 protein ELI_10965.